The primary structure comprises 191 residues: Potassium-transporting ATPase KdpC subunit (191 aa).

Residues 6-26 form a helical membrane-spanning segment; the sequence is PALVLFILLTLLTGGVYPLLT.

Belongs to the KdpC family. In terms of assembly, the system is composed of three essential subunits: KdpA, KdpB and KdpC.

It localises to the cell inner membrane. In terms of biological role, part of the high-affinity ATP-driven potassium transport (or Kdp) system, which catalyzes the hydrolysis of ATP coupled with the electrogenic transport of potassium into the cytoplasm. This subunit acts as a catalytic chaperone that increases the ATP-binding affinity of the ATP-hydrolyzing subunit KdpB by the formation of a transient KdpB/KdpC/ATP ternary complex. This is Potassium-transporting ATPase KdpC subunit from Klebsiella pneumoniae subsp. pneumoniae (strain ATCC 700721 / MGH 78578).